The chain runs to 130 residues: Small ribosomal subunit protein uS9 (130 aa).

Belongs to the universal ribosomal protein uS9 family.

The chain is Small ribosomal subunit protein uS9 from Exiguobacterium sp. (strain ATCC BAA-1283 / AT1b).